Consider the following 33-residue polypeptide: Thrombin-like enzyme RP34 (33 aa).

Positions 1–33 (VIGGDEXDINEHRSLALMYXSWSHRFIXXGXLI) constitute a Peptidase S1 domain.

It belongs to the peptidase S1 family. Snake venom subfamily. As to quaternary structure, homodimer. Expressed by the venom gland.

The protein localises to the secreted. The enzyme catalyses Selective cleavage of Arg-|-Xaa bond in fibrinogen, to form fibrin, and release fibrinopeptide A. The specificity of further degradation of fibrinogen varies with species origin of the enzyme.. Its function is as follows. Thrombin-like snake venom serine protease that displays clotting activity on fibrinogen. Shows both arginine-ester hydrolase and amidase activities on synthetic substrates. Also shows proteolytic activity toward casein. This chain is Thrombin-like enzyme RP34, found in Cerastes cerastes (Horned desert viper).